Reading from the N-terminus, the 123-residue chain is UPF0102 protein Pput_4400 (123 aa).

This sequence belongs to the UPF0102 family.

The sequence is that of UPF0102 protein Pput_4400 from Pseudomonas putida (strain ATCC 700007 / DSM 6899 / JCM 31910 / BCRC 17059 / LMG 24140 / F1).